We begin with the raw amino-acid sequence, 531 residues long: Peptide chain release factor 3 (531 aa).

The region spanning 13 to 282 (AKRRTFAIIS…TLIKYSPPPK (270 aa)) is the tr-type G domain. GTP is bound by residues 22–29 (SHPDAGKT), 90–94 (DTPGH), and 144–147 (NKLD).

This sequence belongs to the TRAFAC class translation factor GTPase superfamily. Classic translation factor GTPase family. PrfC subfamily.

The protein localises to the cytoplasm. Its function is as follows. Increases the formation of ribosomal termination complexes and stimulates activities of RF-1 and RF-2. It binds guanine nucleotides and has strong preference for UGA stop codons. It may interact directly with the ribosome. The stimulation of RF-1 and RF-2 is significantly reduced by GTP and GDP, but not by GMP. This is Peptide chain release factor 3 from Psychrobacter arcticus (strain DSM 17307 / VKM B-2377 / 273-4).